Here is a 725-residue protein sequence, read N- to C-terminus: N-alpha-acetyltransferase 35, NatC auxiliary subunit (725 aa).

Residues 548–573 (ERIMEEQQKGRSSKKTKKKKKVRPLS) form a disordered region. Basic residues predominate over residues 558–571 (RSSKKTKKKKKVRP).

Belongs to the MAK10 family. Component of the N-terminal acetyltransferase C (NatC) complex, which is composed of NAA35, NAA38 and NAA30. As to expression, expressed in primary spermatocytes, basal epidermis, interstitial fibroblasts of skeletal muscle, and intestinal crypts.

It localises to the cytoplasm. Functionally, auxillary component of the N-terminal acetyltransferase C (NatC) complex which catalyzes acetylation of N-terminal methionine residues. N-terminal acetylation protects proteins from ubiquitination and degradation by the N-end rule pathway. Involved in regulation of apoptosis and proliferation of smooth muscle cells. This chain is N-alpha-acetyltransferase 35, NatC auxiliary subunit (Naa35), found in Rattus norvegicus (Rat).